Here is a 161-residue protein sequence, read N- to C-terminus: uncharacterized protein (161 aa).

The segment at 72–134 (CAICLDNLQN…EAQQTCPTCR (63 aa)) adopts an RING-type zinc-finger fold. The segment at 140 to 161 (DKEVEEEERQRNLEELHDSMYG) is disordered.

This is an uncharacterized protein from Caenorhabditis elegans.